Consider the following 384-residue polypeptide: DNA polymerase IV (384 aa).

The 178-residue stretch at 5 to 182 (IIHVDMDAFF…LPVTKVHGIG (178 aa)) folds into the UmuC domain. 3 residues coordinate Mg(2+): Asp9, Met10, and Asp103. The active site involves Glu104.

The protein belongs to the DNA polymerase type-Y family. In terms of assembly, monomer. It depends on Mg(2+) as a cofactor.

The protein resides in the cytoplasm. The catalysed reaction is DNA(n) + a 2'-deoxyribonucleoside 5'-triphosphate = DNA(n+1) + diphosphate. In terms of biological role, poorly processive, error-prone DNA polymerase involved in translesion repair and untargeted mutagenesis. Copies undamaged DNA at stalled replication forks, which arise in vivo from mismatched or misaligned primer ends. These misaligned primers can be extended by PolIV. Exhibits no 3'-5' exonuclease (proofreading) activity. Involved in translesional synthesis. Primer extension fidelity in vitro is temperature-dependent. Inserts a correct base opposite templating bases at 70 degrees Celsius, but at 37 degrees Celsius in addition to correct base pairing, base transitions, transversions and frameshifts can occur. Preferably forms erroneous base pairs C:T. Bypasses 8-oxo-dG oxidative damage by incorporating dATP or dCTP opposite of the damaged DNA template site at both temperatures in vitro. The protein is DNA polymerase IV of Caldanaerobacter subterraneus subsp. tengcongensis (strain DSM 15242 / JCM 11007 / NBRC 100824 / MB4) (Thermoanaerobacter tengcongensis).